The sequence spans 146 residues: Angiogenin (146 aa).

Positions 1–24 are cleaved as a signal peptide; the sequence is MAMSLCPLLLVFVLGLGLTPPSLA. Gln25 is subject to Pyrrolidone carboxylic acid. The active-site Proton acceptor is the His37. Residue Arg45 coordinates tRNA. 3 disulfides stabilise this stretch: Cys50-Cys105, Cys63-Cys116, and Cys81-Cys131. The short motif at 55 to 59 is the Nucleolar localization signal element; that stretch reads VRRHL. The tRNA site is built by Cys105 and Ile127. The active-site Proton donor is the His138.

The protein belongs to the pancreatic ribonuclease family. As to quaternary structure, homodimer. Interacts with RNH1; inhibiting ANG ribonuclease activity. Interacts with PCNA.

The protein resides in the secreted. It localises to the nucleus. The protein localises to the nucleolus. It is found in the cytoplasm. Its subcellular location is the stress granule. Its activity is regulated as follows. Has weak tRNA ribonuclease activity by itself due to partial autoinhibition by its C-terminus, which folds into a short alpha-helix that partially occludes the substrate-binding site. In absence of stress, the ribonuclease activity is inhibited by RNH1 in the cytoplasm. In response to stress, dissociates from RNH1 in the cytoplasm and associates with cytoplasmic ribosomes with vacant A-sites: ribosomes directly activate the tRNA ribonuclease activity of ANG by refolding the C-terminal alpha-helix. In response to stress, the angiogenic activity of ANG is inhibited by RNH1 in the nucleus. Its function is as follows. Secreted ribonuclease that can either promote or restrict cell proliferation of target cells, depending on the context. Endocytosed in target cells via its receptor PLXNB2 and translocates to the cytoplasm or nucleus. Under stress conditions, localizes to the cytoplasm and promotes the assembly of stress granules (SGs): specifically cleaves a subset of tRNAs within anticodon loops to produce tRNA-derived stress-induced fragments (tiRNAs), resulting in translation repression and inhibition of cell proliferation. tiRNas also prevent formation of apoptosome, thereby promoting cell survival. Preferentially cleaves RNAs between a pyrimidine and an adenosine residue, suggesting that it cleaves the anticodon loop of tRNA(Ala) (32-UUAGCAU-38) after positions 33 and 36. Cleaves a subset of tRNAs, including tRNA(Ala), tRNA(Glu), tRNA(Gly), tRNA(Lys), tRNA(Val), tRNA(His), tRNA(Asp) and tRNA(Sec). Under growth conditions and in differentiated cells, translocates to the nucleus and stimulates ribosomal RNA (rRNA) transcription, including that containing the initiation site sequences of 45S rRNA, thereby promoting cell growth and proliferation. Angiogenin induces vascularization of normal and malignant tissues via its ability to promote rRNA transcription. Involved in hematopoietic stem and progenitor cell (HSPC) growth and survival by promoting rRNA transcription in growth conditions and inhibiting translation in response to stress, respectively. Mediates the crosstalk between myeloid and intestinal epithelial cells to protect the intestinal epithelial barrier integrity: secreted by myeloid cells and promotes intestinal epithelial cells proliferation and survival. Also mediates osteoclast-endothelial cell crosstalk in growing bone: produced by osteoclasts and protects the neighboring vascular cells against senescence by promoting rRNA transcription. In Equus caballus (Horse), this protein is Angiogenin (ANG).